The primary structure comprises 523 residues: Succinate-semialdehyde dehydrogenase, mitochondrial (523 aa).

The N-terminal 35 residues, 1 to 35, are a transit peptide targeting the mitochondrion; that stretch reads MATCFLLRSFWAARPALPPPGRFRPEPAGTPRRSY. K74 carries the N6-acetyllysine modification. K114 is subject to N6-acetyllysine; alternate. K114 carries the N6-succinyllysine; alternate modification. An N6-succinyllysine modification is found at K123. K128 is modified (N6-acetyllysine). Position 172 is an N6-succinyllysine (K172). NAD(+)-binding positions include R201 and 216–219; that span reads KPAE. R201 contacts substrate. Residue K253 is modified to N6-acetyllysine; alternate. K253 carries the N6-succinyllysine; alternate modification. NAD(+) is bound at residue 272–277; sequence GSTATG. The active-site Proton acceptor is the E294. R322 contacts substrate. The active-site Nucleophile is C328. C328 and C330 are oxidised to a cystine. Position 347 is an N6-acetyllysine; alternate (K347). K347 carries the post-translational modification N6-succinyllysine; alternate. K353 is subject to N6-acetyllysine. The residue at position 390 (K390) is an N6-succinyllysine. An N6-acetyllysine modification is found at K399. S403 carries the phosphoserine modification. A substrate-binding site is contributed by S486. Residue S487 is modified to Phosphoserine.

The protein belongs to the aldehyde dehydrogenase family. Homotetramer.

The protein localises to the mitochondrion. The enzyme catalyses succinate semialdehyde + NAD(+) + H2O = succinate + NADH + 2 H(+). It participates in amino-acid degradation; 4-aminobutanoate degradation. With respect to regulation, redox-regulated. Inhibited under oxydizing conditions. In terms of biological role, catalyzes one step in the degradation of the inhibitory neurotransmitter gamma-aminobutyric acid (GABA). This is Succinate-semialdehyde dehydrogenase, mitochondrial (Aldh5a1) from Mus musculus (Mouse).